We begin with the raw amino-acid sequence, 308 residues long: ATP synthase gamma chain (308 aa).

It belongs to the ATPase gamma chain family. F-type ATPases have 2 components, CF(1) - the catalytic core - and CF(0) - the membrane proton channel. CF(1) has five subunits: alpha(3), beta(3), gamma(1), delta(1), epsilon(1). CF(0) has three main subunits: a, b and c.

It localises to the cell membrane. In terms of biological role, produces ATP from ADP in the presence of a proton gradient across the membrane. The gamma chain is believed to be important in regulating ATPase activity and the flow of protons through the CF(0) complex. The chain is ATP synthase gamma chain from Saccharopolyspora erythraea (strain ATCC 11635 / DSM 40517 / JCM 4748 / NBRC 13426 / NCIMB 8594 / NRRL 2338).